We begin with the raw amino-acid sequence, 209 residues long: Protein-L-isoaspartate O-methyltransferase (209 aa).

Residue Ser59 is part of the active site.

It belongs to the methyltransferase superfamily. L-isoaspartyl/D-aspartyl protein methyltransferase family. As to quaternary structure, monomer.

Its subcellular location is the cytoplasm. It catalyses the reaction [protein]-L-isoaspartate + S-adenosyl-L-methionine = [protein]-L-isoaspartate alpha-methyl ester + S-adenosyl-L-homocysteine. Its function is as follows. Catalyzes the methyl esterification of L-isoaspartyl residues in peptides and proteins that result from spontaneous decomposition of normal L-aspartyl and L-asparaginyl residues. It plays a role in the repair and/or degradation of damaged proteins. The sequence is that of Protein-L-isoaspartate O-methyltransferase (pcm) from Helicobacter pylori (strain J99 / ATCC 700824) (Campylobacter pylori J99).